A 445-amino-acid chain; its full sequence is Inward rectifier potassium channel 4 (445 aa).

Residues 1–55 (MHGHSRNGQAHVPRRKRRNRFVKKNGQCNVYFANLSNKSQRYMADIFTTCVDTRW) are Cytoplasmic-facing. The chain crosses the membrane as a helical span at residues 56-80 (RYMLMIFSAAFLVSWLFFGLLFWCI). Residues 81–120 (AFFHGDLEASPGVPAAGGPAAGGGGAAPVAPKPCIMHVNG) lie on the Extracellular side of the membrane. Residues 91-111 (PGVPAAGGPAAGGGGAAPVAP) form a val/Gly/Ala/Pro stretch region. An intramembrane region (helical; Pore-forming) is located at residues 121-132 (FLGAFLFSVETQ). The segment at residues 133–139 (TTIGYGF) is an intramembrane region (pore-forming). Residues 134–139 (TIGYGF) carry the Selectivity filter motif. Residues 140-148 (RCVTEECPL) are Extracellular-facing. The chain crosses the membrane as a helical span at residues 149–170 (AVIAVVVQSIVGCVIDSFMIGT). Topologically, residues 171-445 (IMAKMARPKK…NISYRRESAI (275 aa)) are cytoplasmic. Residues 443–445 (SAI) carry the PDZ-binding motif.

The protein belongs to the inward rectifier-type potassium channel (TC 1.A.2.1) family. KCNJ4 subfamily. Homomultimeric and heteromultimeric association with KCNJ2 and KCNJ12. Interacts with DLG2 and DLG4. Associates, via its PDZ-recognition domain, with a complex containing LIN7A, LIN7B, LIN7C, DLG1, CASK and APBA1. Interacts with TAX1BP3. TAX1BP3 competes with LIN7 family members for KCNJ4 binding. As to expression, heart, skeletal muscle, and several different brain regions including the hippocampus.

The protein resides in the cell membrane. It localises to the postsynaptic cell membrane. It is found in the cytoplasmic vesicle membrane. The catalysed reaction is K(+)(in) = K(+)(out). Its function is as follows. Inward rectifier potassium channels are characterized by a greater tendency to allow potassium to flow into the cell rather than out of it. Their voltage dependence is regulated by the concentration of extracellular potassium; as external potassium is raised, the voltage range of the channel opening shifts to more positive voltages. The inward rectification is mainly due to the blockage of outward current by internal magnesium. Can be blocked by extracellular barium and cesium. This is Inward rectifier potassium channel 4 (KCNJ4) from Homo sapiens (Human).